The following is a 131-amino-acid chain: SPbeta prophage-derived uncharacterized protein YomZ (131 aa).

In Bacillus subtilis (strain 168), this protein is SPbeta prophage-derived uncharacterized protein YomZ (yomZ).